The following is an 85-amino-acid chain: MNTVTDETHAISVNQLRAFIERIERLEEEKKTISDDIKEVYAELKGSGFDSKAVRSIIRLRKKEEHERMEEEAIIQLYKDALGMS.

This sequence belongs to the UPF0335 family.

The polypeptide is UPF0335 protein BH15140 (Bartonella henselae (strain ATCC 49882 / DSM 28221 / CCUG 30454 / Houston 1) (Rochalimaea henselae)).